The sequence spans 940 residues: UvrABC system protein A (940 aa).

31-38 lines the ATP pocket; the sequence is GLSGSGKS. A C4-type zinc finger spans residues 252–279; sequence CPHCGYSMQELEPRLFSFNNPAGACGTC. 2 consecutive ABC transporter domains span residues 309–586 and 606–936; these read WDQK…PDSL and RDKN…RFLK. An ATP-binding site is contributed by 639 to 646; that stretch reads GVSGSGKS. The C4-type zinc-finger motif lies at 739-765; it reads CEACQGDGVIKVEMHFLPDVYVPCDVC.

The protein belongs to the ABC transporter superfamily. UvrA family. As to quaternary structure, forms a heterotetramer with UvrB during the search for lesions.

The protein localises to the cytoplasm. In terms of biological role, the UvrABC repair system catalyzes the recognition and processing of DNA lesions. UvrA is an ATPase and a DNA-binding protein. A damage recognition complex composed of 2 UvrA and 2 UvrB subunits scans DNA for abnormalities. When the presence of a lesion has been verified by UvrB, the UvrA molecules dissociate. In Vibrio vulnificus (strain CMCP6), this protein is UvrABC system protein A.